The primary structure comprises 184 residues: Adenine phosphoribosyltransferase (184 aa).

It belongs to the purine/pyrimidine phosphoribosyltransferase family. As to quaternary structure, homodimer.

It localises to the cytoplasm. The enzyme catalyses AMP + diphosphate = 5-phospho-alpha-D-ribose 1-diphosphate + adenine. It participates in purine metabolism; AMP biosynthesis via salvage pathway; AMP from adenine: step 1/1. Catalyzes a salvage reaction resulting in the formation of AMP, that is energically less costly than de novo synthesis. In Sphingopyxis alaskensis (strain DSM 13593 / LMG 18877 / RB2256) (Sphingomonas alaskensis), this protein is Adenine phosphoribosyltransferase.